A 791-amino-acid polypeptide reads, in one-letter code: Protein SEY1 (791 aa).

Residues 1-685 (MSEDGASKCQ…KRSTIKSHTH (685 aa)) are Cytoplasmic-facing. Residues 40–268 (GLDYHVISVF…REDYYLSGKY (229 aa)) form the GB1/RHD3-type G domain. Residue 50–57 (GSQSSGKS) coordinates GTP. A helical membrane pass occupies residues 686 to 706 (IPMWIYAIIAVLGWNEFMLVL). Residues 707–709 (RNP) lie on the Lumenal side of the membrane. Residues 710 to 730 (LFIALMLLIVGAAYTVHRLNL) traverse the membrane as a helical segment. The Cytoplasmic segment spans residues 731–791 (WTPLATFASA…NETKENANES (61 aa)). The segment at 763–791 (PKNASSKPVESFEMQDLSVNETKENANES) is disordered.

It belongs to the TRAFAC class dynamin-like GTPase superfamily. GB1/RHD3 GTPase family. RHD3 subfamily.

The protein localises to the endoplasmic reticulum membrane. In terms of biological role, cooperates with the reticulon proteins and tubule-shaping DP1 family proteins to generate and maintain the structure of the tubular endoplasmic reticulum network. Has GTPase activity, which is required for its function in ER organization. The polypeptide is Protein SEY1 (Eremothecium gossypii (strain ATCC 10895 / CBS 109.51 / FGSC 9923 / NRRL Y-1056) (Yeast)).